Consider the following 243-residue polypeptide: tRNA pseudouridine synthase A (243 aa).

The Nucleophile role is filled by Asp54. Tyr112 lines the substrate pocket.

This sequence belongs to the tRNA pseudouridine synthase TruA family. Homodimer.

The enzyme catalyses uridine(38/39/40) in tRNA = pseudouridine(38/39/40) in tRNA. Functionally, formation of pseudouridine at positions 38, 39 and 40 in the anticodon stem and loop of transfer RNAs. This Onion yellows phytoplasma (strain OY-M) protein is tRNA pseudouridine synthase A.